A 179-amino-acid polypeptide reads, in one-letter code: MSRLYLYYKNKVIPNLIKKFNYSSIMAVPQIIKITLNMGIGKSIINKKILDYAIDDLTKISGQKPIITIAKKSIASFKIRKGYPIGCKVTLRGRRKWDFFDKLITIVIPRIRDFRGMSRKSFDGRGNYSLGIREQIIFPEINYEKIDSIRGMDITITTNSKSNQEGECLLTEFDFPFQK.

The protein belongs to the universal ribosomal protein uL5 family. In terms of assembly, part of the 50S ribosomal subunit; part of the 5S rRNA/L5/L18/L25 subcomplex. Contacts the 5S rRNA and the P site tRNA. Forms a bridge to the 30S subunit in the 70S ribosome.

Functionally, this is one of the proteins that bind and probably mediate the attachment of the 5S RNA into the large ribosomal subunit, where it forms part of the central protuberance. In the 70S ribosome it contacts protein S13 of the 30S subunit (bridge B1b), connecting the 2 subunits; this bridge is implicated in subunit movement. Contacts the P site tRNA; the 5S rRNA and some of its associated proteins might help stabilize positioning of ribosome-bound tRNAs. The polypeptide is Large ribosomal subunit protein uL5 (Buchnera aphidicola subsp. Cinara cedri (strain Cc)).